The chain runs to 458 residues: Brassinosteroid-related acyltransferase 1 (458 aa).

His164 (proton acceptor) is an active-site residue.

The protein belongs to the plant acyltransferase family. Highly expressed in young tissues and vascular bundles. Mostly expressed in young leaves, primary roots, flowers (including petals and sepals), and siliques.

It is found in the endoplasmic reticulum. Its subcellular location is the nucleus. Its pathway is plant hormone biosynthesis; brassinosteroid biosynthesis. Its function is as follows. Brassinosteroids (BR) acyltransferase with acyl-CoA ligase activity toward brassinolide (BL), castasterone (CS), typhasterol (TY), 6-deoxotyphasterol (6-deoxoTY), and 6-deoxocastasterone (6-deoxoCS) and thus converts them to corresponding lauroyl esters. Regulates BR homeostasis and promotes BR-mediated cell growth regulation. Involved in vascular bundle development. The sequence is that of Brassinosteroid-related acyltransferase 1 from Arabidopsis thaliana (Mouse-ear cress).